Here is a 216-residue protein sequence, read N- to C-terminus: Octanoyltransferase (216 aa).

In terms of domain architecture, BPL/LPL catalytic spans 35–213; it reads NSNPDFIWIG…IIQEEFNFDF (179 aa). Substrate-binding positions include 77–84, 144–146, and 157–159; these read RGGEVTCH, SIG, and GFS. Cys175 serves as the catalytic Acyl-thioester intermediate.

This sequence belongs to the LipB family.

The protein resides in the cytoplasm. The catalysed reaction is octanoyl-[ACP] + L-lysyl-[protein] = N(6)-octanoyl-L-lysyl-[protein] + holo-[ACP] + H(+). It participates in protein modification; protein lipoylation via endogenous pathway; protein N(6)-(lipoyl)lysine from octanoyl-[acyl-carrier-protein]: step 1/2. Functionally, catalyzes the transfer of endogenously produced octanoic acid from octanoyl-acyl-carrier-protein onto the lipoyl domains of lipoate-dependent enzymes. Lipoyl-ACP can also act as a substrate although octanoyl-ACP is likely to be the physiological substrate. This Prochlorococcus marinus (strain MIT 9312) protein is Octanoyltransferase.